Consider the following 184-residue polypeptide: ATP synthase subunit b, chloroplastic (184 aa).

A helical transmembrane segment spans residues 27–49 (LATNLINLSVVLGVLIFFGKGVL).

The protein belongs to the ATPase B chain family. In terms of assembly, F-type ATPases have 2 components, F(1) - the catalytic core - and F(0) - the membrane proton channel. F(1) has five subunits: alpha(3), beta(3), gamma(1), delta(1), epsilon(1). F(0) has four main subunits: a(1), b(1), b'(1) and c(10-14). The alpha and beta chains form an alternating ring which encloses part of the gamma chain. F(1) is attached to F(0) by a central stalk formed by the gamma and epsilon chains, while a peripheral stalk is formed by the delta, b and b' chains.

The protein localises to the plastid. It localises to the chloroplast thylakoid membrane. Functionally, f(1)F(0) ATP synthase produces ATP from ADP in the presence of a proton or sodium gradient. F-type ATPases consist of two structural domains, F(1) containing the extramembraneous catalytic core and F(0) containing the membrane proton channel, linked together by a central stalk and a peripheral stalk. During catalysis, ATP synthesis in the catalytic domain of F(1) is coupled via a rotary mechanism of the central stalk subunits to proton translocation. In terms of biological role, component of the F(0) channel, it forms part of the peripheral stalk, linking F(1) to F(0). The protein is ATP synthase subunit b, chloroplastic of Spinacia oleracea (Spinach).